Consider the following 246-residue polypeptide: Indole-3-glycerol phosphate synthase (246 aa).

The protein belongs to the TrpC family.

It catalyses the reaction 1-(2-carboxyphenylamino)-1-deoxy-D-ribulose 5-phosphate + H(+) = (1S,2R)-1-C-(indol-3-yl)glycerol 3-phosphate + CO2 + H2O. It participates in amino-acid biosynthesis; L-tryptophan biosynthesis; L-tryptophan from chorismate: step 4/5. The polypeptide is Indole-3-glycerol phosphate synthase (Sulfurisphaera tokodaii (strain DSM 16993 / JCM 10545 / NBRC 100140 / 7) (Sulfolobus tokodaii)).